Reading from the N-terminus, the 124-residue chain is Small ribosomal subunit protein bS6 (124 aa).

The disordered stretch occupies residues 96–124 (ETAPSPMMKEVQREEARKAAQTTTEGQAA). A compositionally biased stretch (polar residues) spans 115–124 (AQTTTEGQAA).

It belongs to the bacterial ribosomal protein bS6 family.

Functionally, binds together with bS18 to 16S ribosomal RNA. The protein is Small ribosomal subunit protein bS6 of Cupriavidus pinatubonensis (strain JMP 134 / LMG 1197) (Cupriavidus necator (strain JMP 134)).